We begin with the raw amino-acid sequence, 361 residues long: Probable lipid desaturase ADS3.2, chloroplastic (361 aa).

The transit peptide at 1 to 57 (MMSLSTTLKPLSHFSPFVKRHNPKTNNTLFTLDTHNFTNSFWSKRGGSVSHRKHTVV) directs the protein to the chloroplast. Transmembrane regions (helical) follow at residues 99 to 118 (LVIF…YFSW) and 122 to 139 (WVFP…TLSY). The Histidine box-1 motif lies at 140–145 (HRNLSH). The Histidine box-2 motif lies at 177-181 (HRYHH). Residues 246–266 (FLFYFCGGMPLLVWGIGITIA) form a helical membrane-spanning segment. A Histidine box-3 motif is present at residues 309–313 (HNNHH).

Belongs to the fatty acid desaturase type 1 family. Requires Fe(2+) as cofactor.

It is found in the plastid. It localises to the chloroplast membrane. The protein operates within lipid metabolism; polyunsaturated fatty acid biosynthesis. The chain is Probable lipid desaturase ADS3.2, chloroplastic from Arabidopsis thaliana (Mouse-ear cress).